Reading from the N-terminus, the 408-residue chain is D-galactonate dehydratase family member OG2516_05608 (408 aa).

Mg(2+) is bound at residue Asp-215. A D-arabinonate-binding site is contributed by His-217. Mg(2+) contacts are provided by Glu-241 and Glu-267. D-arabinonate is bound by residues Glu-267, Arg-288, His-317, and Glu-344.

The protein belongs to the mandelate racemase/muconate lactonizing enzyme family. GalD subfamily.

Its function is as follows. Has no detectable activity with D-mannonate and with a panel of 70 other acid sugars (in vitro), in spite of the conservation of the residues that are expected to be important for catalytic activity and cofactor binding. May have evolved a divergent function. The sequence is that of D-galactonate dehydratase family member OG2516_05608 from Oceanicola granulosus (strain ATCC BAA-861 / DSM 15982 / KCTC 12143 / HTCC2516).